We begin with the raw amino-acid sequence, 920 residues long: Dynamin-B (920 aa).

Residues 65–84 (NSNNNNNNNNNNKINKNNNN) form a disordered region. Residues 154–448 (EITLPQIIVV…LTKHIRDTFP (295 aa)) form the Dynamin-type G domain. A G1 motif region spans residues 164–171 (GSQSSGKS). 164-172 (GSQSSGKSS) provides a ligand contact to GTP. The tract at residues 190–192 (VTR) is G2 motif. The disordered stretch occupies residues 204–241 (TTSRNNVNENEDEDEDDNYYDNDNDDNSLEEWGEFGHT). Over residues 212 to 236 (ENEDEDEDDNYYDNDNDDNSLEEWG) the composition is skewed to acidic residues. The G3 motif stretch occupies residues 290–293 (DLPG). Residues 359–362 (TKLD) are G4 motif. GTP-binding positions include 359–365 (TKLDLMD) and 390–393 (NRSQ). The interval 389–392 (VNRS) is G5 motif. The interval 680 to 790 (FQSTSSTSSS…EIQIQQQQQQ (111 aa)) is disordered. Low complexity-rich tracts occupy residues 681–705 (QSTS…NSNP) and 724–751 (QIKQ…QKQQ). Residues 724-751 (QIKQQQQQQQQQQQQSYQQQQQQQQKQQ) are a coiled coil. A compositionally biased stretch (pro residues) spans 765 to 774 (PPSPPSPPQP). The span at 775–790 (KQQQSHEIQIQQQQQQ) shows a compositional bias: low complexity. In terms of domain architecture, GED spans 825-916 (IYLLRRLLLA…SLSQSENSDL (92 aa)).

This sequence belongs to the TRAFAC class dynamin-like GTPase superfamily. Dynamin/Fzo/YdjA family.

Its subcellular location is the cytoplasm. In terms of biological role, enzyme hydrolyzing GTP. This is Dynamin-B (dymB) from Dictyostelium discoideum (Social amoeba).